The sequence spans 306 residues: Myb family transcription factor MOF1 (306 aa).

In terms of domain architecture, HTH myb-type spans arginine 19–leucine 79. The H-T-H motif DNA-binding region spans proline 50–arginine 75.

Interacts with TPR1, TPR2 and TPR3. Expressed in roots, leaves, leaf sheaths, culms, panicles, lemmas, paleas, lodicules, stamens, and pistils.

The protein localises to the nucleus. Transcriptional repressor that plays a role in the regulation of organ identity and spikelet meristem determinacy. Interacts with the TPR corepressors to possibly repress the expression of downstream target genes. The protein is Myb family transcription factor MOF1 of Oryza sativa subsp. japonica (Rice).